The sequence spans 244 residues: 5-oxoprolinase subunit A (244 aa).

It belongs to the LamB/PxpA family. In terms of assembly, forms a complex composed of PxpA, PxpB and PxpC.

The catalysed reaction is 5-oxo-L-proline + ATP + 2 H2O = L-glutamate + ADP + phosphate + H(+). In terms of biological role, catalyzes the cleavage of 5-oxoproline to form L-glutamate coupled to the hydrolysis of ATP to ADP and inorganic phosphate. The polypeptide is 5-oxoprolinase subunit A (Shigella boydii serotype 18 (strain CDC 3083-94 / BS512)).